A 303-amino-acid polypeptide reads, in one-letter code: tRNA pseudouridine synthase B (303 aa).

D47 functions as the Nucleophile in the catalytic mechanism.

It belongs to the pseudouridine synthase TruB family. Type 1 subfamily.

The enzyme catalyses uridine(55) in tRNA = pseudouridine(55) in tRNA. Functionally, responsible for synthesis of pseudouridine from uracil-55 in the psi GC loop of transfer RNAs. The chain is tRNA pseudouridine synthase B from Legionella pneumophila (strain Lens).